The primary structure comprises 304 residues: N-acetyl-D-glucosamine kinase (304 aa).

ATP-binding positions include 4–11 and 133–140; these read GFDMGGTK and GVGGGLIV. Residues His-157, Cys-177, Cys-179, and Cys-184 each coordinate Zn(2+).

This sequence belongs to the ROK (NagC/XylR) family. NagK subfamily.

The enzyme catalyses N-acetyl-D-glucosamine + ATP = N-acetyl-D-glucosamine 6-phosphate + ADP + H(+). It functions in the pathway cell wall biogenesis; peptidoglycan recycling. In terms of biological role, catalyzes the phosphorylation of N-acetyl-D-glucosamine (GlcNAc) derived from cell-wall degradation, yielding GlcNAc-6-P. This Yersinia pseudotuberculosis serotype O:3 (strain YPIII) protein is N-acetyl-D-glucosamine kinase.